A 243-amino-acid polypeptide reads, in one-letter code: Small ribosomal subunit protein eS4 (243 aa).

Residues 43-105 form the S4 RNA-binding domain; the sequence is IPLLYIVRDY…TGEHYRVLPN (63 aa).

Belongs to the eukaryotic ribosomal protein eS4 family. Part of the 30S ribosomal subunit.

This Pyrococcus furiosus (strain ATCC 43587 / DSM 3638 / JCM 8422 / Vc1) protein is Small ribosomal subunit protein eS4.